We begin with the raw amino-acid sequence, 384 residues long: Spermidine/putrescine import ATP-binding protein PotA (384 aa).

An ABC transporter domain is found at 6–238; the sequence is ITFNNVSKTF…PINHFVANFI (233 aa). 40 to 47 provides a ligand contact to ATP; sequence GASGSGKS.

Belongs to the ABC transporter superfamily. Spermidine/putrescine importer (TC 3.A.1.11.1) family. The complex is composed of two ATP-binding proteins (PotA), two transmembrane proteins (PotB and PotC) and a solute-binding protein (PotD).

The protein localises to the cell membrane. The catalysed reaction is ATP + H2O + polyamine-[polyamine-binding protein]Side 1 = ADP + phosphate + polyamineSide 2 + [polyamine-binding protein]Side 1.. Part of the ABC transporter complex PotABCD involved in spermidine/putrescine import. Responsible for energy coupling to the transport system. The polypeptide is Spermidine/putrescine import ATP-binding protein PotA (Streptococcus pyogenes serotype M18 (strain MGAS8232)).